The primary structure comprises 233 residues: tRNA1(Val) (adenine(37)-N6)-methyltransferase (233 aa).

The protein belongs to the methyltransferase superfamily. tRNA (adenine-N(6)-)-methyltransferase family.

It is found in the cytoplasm. It catalyses the reaction adenosine(37) in tRNA1(Val) + S-adenosyl-L-methionine = N(6)-methyladenosine(37) in tRNA1(Val) + S-adenosyl-L-homocysteine + H(+). Its function is as follows. Specifically methylates the adenine in position 37 of tRNA(1)(Val) (anticodon cmo5UAC). The protein is tRNA1(Val) (adenine(37)-N6)-methyltransferase of Shewanella amazonensis (strain ATCC BAA-1098 / SB2B).